The sequence spans 204 residues: Recombination protein RecR (204 aa).

Residues 61–76 (CACCNTFSETQVCSTC) form a C4-type zinc finger. One can recognise a Toprim domain in the interval 84 to 183 (SLLCIVETPA…KVTRIARGIP (100 aa)).

It belongs to the RecR family.

Functionally, may play a role in DNA repair. It seems to be involved in an RecBC-independent recombinational process of DNA repair. It may act with RecF and RecO. This chain is Recombination protein RecR, found in Polynucleobacter necessarius subsp. necessarius (strain STIR1).